The chain runs to 161 residues: Dehydrin DHN3 (161 aa).

A compositionally biased stretch (basic and acidic residues) spans 1-12; that stretch reads MEHGHATNRVDE. Positions 1–161 are disordered; it reads MEHGHATNRV…KIKEKLPGQH (161 aa). Gly residues predominate over residues 20-38; that stretch reads HGVGTGMGAHGGVGTGAAA. Composition is skewed to low complexity over residues 93-107 and 115-130; these read DQQQ…HGHT and HGAT…QGHT. Repeat copies occupy residues 101-123 and 124-144. Residues 101 to 144 form a 2 X approximate tandem repeats region; that stretch reads YGQHGHTGMTGTGEHGATATGGTYGQQGHTGMTGTGAHGTDGTG. A compositionally biased stretch (gly residues) spans 131–142; that stretch reads GMTGTGAHGTDG. Residues 143–161 show a composition bias toward basic and acidic residues; that stretch reads TGEKKGIMDKIKEKLPGQH.

It belongs to the plant dehydrin family.

The protein is Dehydrin DHN3 (DHN3) of Hordeum vulgare (Barley).